We begin with the raw amino-acid sequence, 535 residues long: 5,6-dihydroxyindole-2-carboxylic acid oxidase (535 aa).

Residues 1 to 23 (MQLPMLLLVSLPLLLNMFKPAEA) form the signal peptide. Residues 24–478 (QFPRQCATIE…GPLRVTEMIT (455 aa)) are Lumenal, melanosome-facing. 5 cysteine pairs are disulfide-bonded: Cys29-Cys40, Cys41-Cys64, Cys55-Cys98, Cys100-Cys109, and Cys112-Cys121. Asn95 and Asn103 each carry an N-linked (GlcNAc...) asparagine glycan. Asn180 carries an N-linked (GlcNAc...) asparagine glycan. Positions 191, 214, and 223 each coordinate Zn(2+). 2 disulfide bridges follow: Cys257-Cys260 and Cys289-Cys302. Asn303 and Asn349 each carry an N-linked (GlcNAc...) asparagine glycan. Positions 376 and 380 each coordinate Zn(2+). N-linked (GlcNAc...) asparagine glycosylation is present at Asn384. His403 is a binding site for Zn(2+). The chain crosses the membrane as a helical span at residues 479–499 (IAIVTALVLVAIIFAAAACIV). At 500 to 535 (RAKKNRDELHQPLLTDQYQHYSDDYDGIATPSQSVV) the chain is on the cytoplasmic side.

The protein belongs to the tyrosinase family. Tyrosinase, TYRP1 and TYRP2 may form a multienzyme complex. The cofactor is Cu(2+). It depends on Zn(2+) as a cofactor.

The protein resides in the melanosome membrane. It carries out the reaction 2 5,6-dihydroxyindole-2-carboxylate + O2 = 2 indole-5,6-quinone-2-carboxylate + 2 H2O. Its pathway is pigment biosynthesis; melanin biosynthesis. In terms of biological role, plays a role in melanin biosynthesis. Catalyzes the oxidation of 5,6-dihydroxyindole-2-carboxylic acid (DHICA) into indole-5,6-quinone-2-carboxylic acid. May regulate or influence the type of melanin synthesized. Also to a lower extent, capable of hydroxylating tyrosine and producing melanin. The sequence is that of 5,6-dihydroxyindole-2-carboxylic acid oxidase (TYRP1) from Gallus gallus (Chicken).